We begin with the raw amino-acid sequence, 619 residues long: Manganese lipoxygenase (619 aa).

Residues 1 to 16 (MRVLVWIAGLAPLAVA) form the signal peptide. 6 N-linked (GlcNAc...) asparagine glycosylation sites follow: asparagine 32, asparagine 42, asparagine 62, asparagine 86, asparagine 164, and asparagine 229. The Lipoxygenase domain maps to 55-619 (TLPCEDGNST…PGNIPFYLSV (565 aa)). Mn(2+)-binding residues include histidine 298, histidine 303, histidine 483, and asparagine 487. Residues asparagine 515 and asparagine 549 are each glycosylated (N-linked (GlcNAc...) asparagine). Residue valine 619 coordinates Mn(2+).

Belongs to the lipoxygenase family. Manganese lipoxygenase subfamily. It depends on Mn(2+) as a cofactor.

It localises to the secreted. It carries out the reaction (9Z,12Z)-octadecadienoate + O2 = (9S)-hydroperoxy-(10E,12Z)-octadecadienoate. The enzyme catalyses (9Z,12Z)-octadecadienoate + O2 = (11S)-hydroperoxy-(9Z,12Z)-octadecadienoate. It catalyses the reaction (9Z,12Z)-octadecadienoate + O2 = (13R)-hydroperoxy-(9Z,11E)-octadecadienoate. The catalysed reaction is (9Z,12Z,15Z)-octadecatrienoate + O2 = (9S)-hydroperoxy-(10E,12Z,15Z)-octadecatrienoate. It carries out the reaction (9Z,12Z,15Z)-octadecatrienoate + O2 = (11R)-hydroperoxy-(9Z,12Z,15Z)-octadecatrienoate. The enzyme catalyses (9Z,12Z,15Z)-octadecatrienoate + O2 = (13R)-hydroperoxy-(9Z,11E,15Z)-octadecatrienoate. It catalyses the reaction (9S)-hydroperoxy-(10E,12Z,15Z)-octadecatrienoate + O2 = (9S,16S)-dihydroperoxy-(10E,12Z,14E)-octadecatrienoate. Lipoxygenase that metabolizes linoleic and alpha-linolenic acids to 9S-, 11- and 13R-hydroperoxy fatty acids. At the end of lipoxygenation, the intermediate product 11S-HPODE from linoleic acid is then transformed into 9S-HPODE and 13R-HPODE as the final products. The intermediate product 11R-HPOTrE from alpha-linolenic acid is transformed into 9S-HPOTrE and 13R-HPOTrE as the final products. 9S-HPOTrE is further oxidized by the enzyme to 9S,16S-DiHPOTrE as the end product. This chain is Manganese lipoxygenase, found in Pyricularia oryzae (strain 70-15 / ATCC MYA-4617 / FGSC 8958) (Rice blast fungus).